The primary structure comprises 173 residues: Pectinesterase inhibitor 2 (173 aa).

A signal peptide spans 1 to 25 (MAAYLTNRVLMSSLMFFVMTGSLNA). Cysteines 34 and 43 form a disulfide. N-linked (GlcNAc...) asparagine glycosylation is found at asparagine 39 and asparagine 63. A disulfide bond links cysteine 99 and cysteine 139.

Belongs to the PMEI family. Interacts with PPME1. In terms of tissue distribution, highest expression in flowers. Expressed exclusively at the pollen tube tip.

The protein localises to the secreted. It is found in the extracellular space. It localises to the apoplast. Inhibits pectin methylesterase (PME) from flowers, siliques and pollen tube. This Arabidopsis thaliana (Mouse-ear cress) protein is Pectinesterase inhibitor 2.